We begin with the raw amino-acid sequence, 338 residues long: Transferrin receptor subunit ESAG7 (338 aa).

Residues 1–17 form the signal peptide; it reads MRFWFVLLALLGKEIYA. Asn-26 and Asn-110 each carry an N-linked (GlcNAc...) asparagine glycan. 4 disulfides stabilise this stretch: Cys-34-Cys-161, Cys-84-Cys-311, Cys-144-Cys-215, and Cys-230-Cys-247. The N-linked (GlcNAc...) asparagine glycan is linked to Asn-234.

Heterodimer composed of ESAG6 and ESAG7. In terms of processing, N-glycosylated. Glycosylation is dispensable for heterodimer formation and host transferrin binding.

It is found in the cell membrane. It localises to the flagellar pocket. Transferrin receptor subunit involved in receptor-mediated acquisition of iron from the environment by binding host TF/transferrin. In Trypanosoma brucei brucei, this protein is Transferrin receptor subunit ESAG7.